Here is a 471-residue protein sequence, read N- to C-terminus: MSACLRWWSRKFDCEKEYAEAYKQYSKTGKPYATRLKNNDHGIVLPLNSTKEWRTLPHDQLSFLHALSEFADLYMHINMTDRTPLQAVHYCNNTKTLSRFNRLMVDATDRALPLIVGKDTESEWKRANAFHTILSLCSTVAMSVLLGPEFSMDTSLIQTIMMYNTAIMPSCAKRTSYPRILRPFVWRLSPLCRAMKSDLTKTKIKLTPEIKHRIDIARSKKGWLEEGPMSLLDGLIETAFEKGCLSRSSDRGDDDQQVALLAEEIIFYHFELSTPVAFFIIFAVYVIMNNKEYSTPLREEISEALKLSGGSFTLDTLNHAPKLASFVKETCRFFRRVMKPIHLESINLSLKPGTIIMAPGRDVHLDPDYYDNPTTFNGYRFYDASRGTCTPHISTTSPTFLTFSHGISACPARVLATQITRTIFIMFLLKFDVELAHEEMPAYGFANGPAYLPNPSVMMRVRPCQKDVLGV.

Residues 265-285 (IIFYHFELSTPVAFFIIFAVY) traverse the membrane as a helical segment. Cysteine 410 is a binding site for heme.

It belongs to the cytochrome P450 family. Requires heme as cofactor.

Its subcellular location is the membrane. Its pathway is secondary metabolite biosynthesis. Its function is as follows. Cytochrome P450 monooxygenase; part of the gene cluster that mediates the biosynthesis of aflavarin, a bicoumarin that exhibits anti-insectan activity against the fungivorous beetle C.hemipterus. This is Cytochrome P450 monooxygenase afvE from Aspergillus flavus (strain ATCC 200026 / FGSC A1120 / IAM 13836 / NRRL 3357 / JCM 12722 / SRRC 167).